We begin with the raw amino-acid sequence, 102 residues long: MYAVVRTGGKQYKVSEGDFLKVEKLEGAVGDTVELSEVLMVGGDKVAIGTPLVPSASVVGKIVEQGKDKKILVFKSKRRKDSRKLNGHRQLRTILKIEKINA.

Belongs to the bacterial ribosomal protein bL21 family. In terms of assembly, part of the 50S ribosomal subunit. Contacts protein L20.

In terms of biological role, this protein binds to 23S rRNA in the presence of protein L20. The chain is Large ribosomal subunit protein bL21 from Geotalea uraniireducens (strain Rf4) (Geobacter uraniireducens).